Reading from the N-terminus, the 89-residue chain is uncharacterized protein (89 aa).

The first 27 residues, 1–27 (MKKAAAVLLSLGLVFGFSYGAGHVAEA), serve as a signal peptide directing secretion.

This is an uncharacterized protein from Bacillus subtilis (strain 168).